The chain runs to 288 residues: 4-diphosphocytidyl-2-C-methyl-D-erythritol kinase (288 aa).

Lys-11 is a catalytic residue. 100–110 (PIAAGLGSGSS) contributes to the ATP binding site. Asp-140 is a catalytic residue.

It belongs to the GHMP kinase family. IspE subfamily.

It catalyses the reaction 4-CDP-2-C-methyl-D-erythritol + ATP = 4-CDP-2-C-methyl-D-erythritol 2-phosphate + ADP + H(+). Its pathway is isoprenoid biosynthesis; isopentenyl diphosphate biosynthesis via DXP pathway; isopentenyl diphosphate from 1-deoxy-D-xylulose 5-phosphate: step 3/6. Catalyzes the phosphorylation of the position 2 hydroxy group of 4-diphosphocytidyl-2C-methyl-D-erythritol. This chain is 4-diphosphocytidyl-2-C-methyl-D-erythritol kinase, found in Wolbachia sp. subsp. Drosophila simulans (strain wRi).